The chain runs to 112 residues: U-scoloptoxin(16)-Er5a (112 aa).

The signal sequence occupies residues Met-1–Ala-26.

This sequence belongs to the scoloptoxin-16 family. In terms of processing, contains 2 disulfide bonds. In terms of tissue distribution, expressed by the venom gland.

The protein localises to the secreted. The polypeptide is U-scoloptoxin(16)-Er5a (Ethmostigmus rubripes (Giant centipede)).